The primary structure comprises 194 residues: Small ribosomal subunit protein eS7 (194 aa).

This sequence belongs to the eukaryotic ribosomal protein eS7 family.

In Drosophila yakuba (Fruit fly), this protein is Small ribosomal subunit protein eS7 (RpS7).